The primary structure comprises 87 residues: Small ribosomal subunit protein bS20 (87 aa).

It belongs to the bacterial ribosomal protein bS20 family.

Binds directly to 16S ribosomal RNA. This is Small ribosomal subunit protein bS20 from Geobacter sulfurreducens (strain ATCC 51573 / DSM 12127 / PCA).